A 232-amino-acid chain; its full sequence is Orotate phosphoribosyltransferase (232 aa).

5-phospho-alpha-D-ribose 1-diphosphate contacts are provided by residues Arg107, Lys108, Lys111, His113, and 133 to 141; that span reads EDLTTAGGS. Residue Thr137 participates in orotate binding.

The protein belongs to the purine/pyrimidine phosphoribosyltransferase family. PyrE subfamily. Homodimer. Mg(2+) is required as a cofactor.

It catalyses the reaction orotidine 5'-phosphate + diphosphate = orotate + 5-phospho-alpha-D-ribose 1-diphosphate. It participates in pyrimidine metabolism; UMP biosynthesis via de novo pathway; UMP from orotate: step 1/2. Its function is as follows. Catalyzes the transfer of a ribosyl phosphate group from 5-phosphoribose 1-diphosphate to orotate, leading to the formation of orotidine monophosphate (OMP). The protein is Orotate phosphoribosyltransferase of Sinorhizobium medicae (strain WSM419) (Ensifer medicae).